A 158-amino-acid chain; its full sequence is SsrA-binding protein (158 aa).

Belongs to the SmpB family.

It is found in the cytoplasm. In terms of biological role, required for rescue of stalled ribosomes mediated by trans-translation. Binds to transfer-messenger RNA (tmRNA), required for stable association of tmRNA with ribosomes. tmRNA and SmpB together mimic tRNA shape, replacing the anticodon stem-loop with SmpB. tmRNA is encoded by the ssrA gene; the 2 termini fold to resemble tRNA(Ala) and it encodes a 'tag peptide', a short internal open reading frame. During trans-translation Ala-aminoacylated tmRNA acts like a tRNA, entering the A-site of stalled ribosomes, displacing the stalled mRNA. The ribosome then switches to translate the ORF on the tmRNA; the nascent peptide is terminated with the 'tag peptide' encoded by the tmRNA and targeted for degradation. The ribosome is freed to recommence translation, which seems to be the essential function of trans-translation. This chain is SsrA-binding protein, found in Saccharopolyspora erythraea (strain ATCC 11635 / DSM 40517 / JCM 4748 / NBRC 13426 / NCIMB 8594 / NRRL 2338).